The primary structure comprises 289 residues: Serine/threonine-protein phosphatase PGAM5, mitochondrial (289 aa).

The Mitochondrial matrix segment spans residues 1–6 (MAFRQA). A helical transmembrane segment spans residues 7 to 29 (LQLAACGLAGGSAAVLFSAVAVG). Over 30-289 (KPRAGGDAEP…FMPPDKITRS (260 aa)) the chain is Mitochondrial intermembrane. Residues 32–59 (RAGGDAEPRPAEPPAWAGGARPGPGVWD) form a disordered region. A compositionally biased stretch (low complexity) spans 45–56 (PAWAGGARPGPG). The segment at 77 to 82 (NVESGE) is interaction with KEAP1. Phosphoserine occurs at positions 80 and 87. 3 positions are modified to N6-acetyllysine: K116, K144, and K191.

It belongs to the phosphoglycerate mutase family. BPG-dependent PGAM subfamily. Dimer. Forms a ternary complex with NFE2L2 and KEAP1. Interacts with BCL2L1 and MAP3K5. Upon TNF-induced necrosis, forms in complex with RIPK1, RIPK3 and MLKL; the formation of this complex leads to PGAM5 phosphorylation. Isoform 2, but not isoform 1, interacts with DNM1L; this interaction leads to DNM1L dephosphorylation and activation and eventually to mitochondria fragmentation. In terms of processing, both isoform 1 and isoform 2 are phosphorylated by the RIPK1/RIPK3 complex under necrotic conditions. This phosphorylation increases PGAM5 phosphatase activity. Post-translationally, proteolytically cleaved by PARL in response to loss of mitochondrial membrane potential.

The protein localises to the mitochondrion outer membrane. It localises to the mitochondrion inner membrane. The enzyme catalyses O-phospho-L-seryl-[protein] + H2O = L-seryl-[protein] + phosphate. It carries out the reaction O-phospho-L-threonyl-[protein] + H2O = L-threonyl-[protein] + phosphate. In terms of biological role, mitochondrial serine/threonine phosphatase that dephosphorylates various substrates and thus plays a role in different biological processes including cellular senescence or mitophagy. Modulates cellular senescence by regulating mitochondrial dynamics. Mechanistically, participates in mitochondrial fission through dephosphorylating DNM1L/DRP1. Additionally, dephosphorylates MFN2 in a stress-sensitive manner and consequently protects it from ubiquitination and degradation to promote mitochondrial network formation. Regulates mitophagy independent of PARKIN by interacting with and dephosphorylating FUNDC1, which interacts with LC3. Regulates anti-oxidative response by forming a tertiary complex with KEAP1 and NRF2. Regulates necroptosis by acting as a RIPK3 target and recruiting the RIPK1-RIPK3-MLKL necrosis 'attack' complex to mitochondria. The protein is Serine/threonine-protein phosphatase PGAM5, mitochondrial (PGAM5) of Homo sapiens (Human).